We begin with the raw amino-acid sequence, 58 residues long: MAKIKIKQTGSPIRRPESQKKILVGLGLNKMHKVVELEDTPEVRGAIAKIPHLVEVVD.

The protein belongs to the universal ribosomal protein uL30 family. As to quaternary structure, part of the 50S ribosomal subunit.

This Erythrobacter litoralis (strain HTCC2594) protein is Large ribosomal subunit protein uL30.